Here is a 164-residue protein sequence, read N- to C-terminus: Ubiquitin-fold modifier-conjugating enzyme 1 (164 aa).

The Glycyl thioester intermediate role is filled by Cys116.

Belongs to the ubiquitin-conjugating enzyme family. UFC1 subfamily.

E2-like enzyme which forms an intermediate with UFM1 via a thioester linkage. The sequence is that of Ubiquitin-fold modifier-conjugating enzyme 1 from Drosophila ananassae (Fruit fly).